We begin with the raw amino-acid sequence, 160 residues long: MGVAKKPDLSDPVSRAKLAKGMGHNYYGEPAWPNDLLYIPPVVIPGTIACTVGLAVLEPSMIGEPANPFATPLEILPEWYFSPVFQILRTVPNKLLGVLLMAAVPAGLLVVPFPENVNKFQNPFRRPVATTVFSAGTAVAPWLGIGAALPIDKSLTLGLF.

3 helical membrane passes run 36 to 56 (LLYI…GLAV), 95 to 115 (LLGV…PFPE), and 131 to 151 (TVFS…ALPI).

This sequence belongs to the cytochrome b family. PetD subfamily. In terms of assembly, the 4 large subunits of the cytochrome b6-f complex are cytochrome b6, subunit IV (17 kDa polypeptide, petD), cytochrome f and the Rieske protein, while the 4 small subunits are petG, petL, petM and petN. The complex functions as a dimer.

It is found in the plastid. The protein localises to the chloroplast thylakoid membrane. Its function is as follows. Component of the cytochrome b6-f complex, which mediates electron transfer between photosystem II (PSII) and photosystem I (PSI), cyclic electron flow around PSI, and state transitions. The chain is Cytochrome b6-f complex subunit 4 from Huperzia lucidula (Shining clubmoss).